A 412-amino-acid polypeptide reads, in one-letter code: Histidine--tRNA ligase (412 aa).

It belongs to the class-II aminoacyl-tRNA synthetase family. As to quaternary structure, homodimer.

The protein localises to the cytoplasm. It catalyses the reaction tRNA(His) + L-histidine + ATP = L-histidyl-tRNA(His) + AMP + diphosphate + H(+). This chain is Histidine--tRNA ligase, found in Rickettsia typhi (strain ATCC VR-144 / Wilmington).